We begin with the raw amino-acid sequence, 516 residues long: L-amino acid oxidase (516 aa).

A signal peptide spans 1-18 (MNVFFMFSLLFLAALESC). FAD-binding positions include 61-62 (MS), 81-82 (EA), Arg-89, and 105-108 (GPMR). Arg-108 contributes to the substrate binding site. Asn-190 carries N-linked (GlcNAc...) asparagine glycosylation. Residue Val-279 coordinates FAD. N-linked (GlcNAc...) asparagine glycosylation is found at Asn-299 and Asn-404. Residues Cys-349 and Cys-430 are joined by a disulfide bond. Residues Glu-475 and 482–487 (GWIDST) contribute to the FAD site. Substrate is bound at residue 482-483 (GW).

The protein belongs to the flavin monoamine oxidase family. FIG1 subfamily. As to quaternary structure, homodimer; non-covalently linked. FAD is required as a cofactor. In terms of processing, N-glycosylated (14%). The enzymatic activity remains unchanged after deglycosylation. Expressed by the venom gland.

The protein resides in the secreted. The enzyme catalyses an L-alpha-amino acid + O2 + H2O = a 2-oxocarboxylate + H2O2 + NH4(+). It catalyses the reaction L-leucine + O2 + H2O = 4-methyl-2-oxopentanoate + H2O2 + NH4(+). It carries out the reaction L-phenylalanine + O2 + H2O = 3-phenylpyruvate + H2O2 + NH4(+). The catalysed reaction is L-tryptophan + O2 + H2O = indole-3-pyruvate + H2O2 + NH4(+). The enzyme catalyses L-methionine + O2 + H2O = 4-methylsulfanyl-2-oxobutanoate + H2O2 + NH4(+). It catalyses the reaction L-isoleucine + O2 + H2O = (S)-3-methyl-2-oxopentanoate + H2O2 + NH4(+). With respect to regulation, inhibited by the substrate analog N-acetyl tryptophan. Functionally, catalyzes an oxidative deamination of predominantly hydrophobic and aromatic L-amino acids, thus producing hydrogen peroxide that may contribute to the diverse toxic effects of this enzyme. Is highly active on L-Met&gt;L-Leu&gt;L-Phe&gt;L-Trp=L-Ile. Binds to the cell surface and enables the production of highly localized concentration of hydrogen peroxide in or near the binding interfaces. Does not bind to phospholipids. Induces platelet-rich plasma aggregation, shows cytotoxic effects on some cancer cell lines (B16-F10 (mouse melanoma), PC12 (rat pheochromocytoma), MCF-7 and MDA-MB-231 (human breast carcinoma)) and shows antibacterial activities against both Gram-positive and Gram-negative bacteria. Also exhibits hemorrhage and edema. Does not show cytotoxicity on erythrocytes and peripheral blood mononuclear cells. Its effect on platelets is controversial, since it either induces aggregation or inhibits agonist-induced aggregation. These different effects are probably due to different experimental conditions. This Cerastes cerastes (Horned desert viper) protein is L-amino acid oxidase.